The primary structure comprises 1459 residues: DNA-binding protein RFX7 (1459 aa).

The disordered stretch occupies residues 1-27 (MAEEQQQPPPQQLDAPQQLPLSAPNPG). The segment covering 12–21 (QLDAPQQLPL) has biased composition (low complexity). The segment at residues 108 to 183 (AFSWIRNTLE…YCYSGLRKKA (76 aa)) is a DNA-binding region (RFX-type winged-helix). A PxLPxI/L motif; mediates interaction with ANKRA2 and RFXANK motif is present at residues 188-193 (PTLPNL). Disordered regions lie at residues 303–347 (AKQQ…LPNG), 404–428 (SVKQ…ARHR), 482–590 (PSNS…GVTE), 634–659 (FTST…SPRK), 688–716 (GQKP…AQIP), and 918–1016 (SVTP…VPPS). Polar residues-rich tracts occupy residues 404–416 (SVKQ…QNVP) and 482–502 (PSNS…TGTT). The segment covering 521-534 (SPGSRASSTGGTSA) has biased composition (low complexity). Residues 537-549 (VKMEPEGSSDEHP) show a composition bias toward basic and acidic residues. 3 stretches are compositionally biased toward polar residues: residues 562–578 (PLTT…NTDG), 634–645 (FTSTSSPSNGDS), and 706–716 (TESSTAGAQIP). The span at 947–963 (TPTPTPTPTPTPTPTPT) shows a compositional bias: pro residues. The segment covering 971–1009 (GSQSLSRESPCSRLAQTTPVDSALGSSRHTPIGTPHSNC) has biased composition (polar residues).

The protein belongs to the RFX family. In terms of assembly, interacts (via PxLPxI/L motif) with RFXANK (via ankyrin repeats). Interacts (via PxLPxI/L motif) with ANKRA2 (via ankyrin repeats). As to expression, expressed in spleen and lymph node and to a lower extend in brain (at protein level). Expressed in lymphoid organs and lymphoid cell subsets. Expressed throughout natural killer (NK) cell maturation.

Its subcellular location is the nucleus. Functionally, transcription factor. Acts as a transcriptional activator by binding to promoter regions of target genes, such as Rec8, Mxd4 and Ddit4. Plays a role in natural killer (NK) cell maintenance and immunity. May play a role in the process of ciliogenesis in the neural tube and neural tube closure. This Mus musculus (Mouse) protein is DNA-binding protein RFX7.